The sequence spans 129 residues: uncharacterized protein (129 aa).

It localises to the cytoplasm. It is found in the cytosol. The protein localises to the nucleus. This is an uncharacterized protein from Schizosaccharomyces pombe (strain 972 / ATCC 24843) (Fission yeast).